The primary structure comprises 313 residues: Ornithine carbamoyltransferase (313 aa).

Carbamoyl phosphate-binding positions include Ser-61–Thr-64, Gln-88, Arg-112, and His-139–Gln-142. Residues Asn-170, Asp-228, and Ser-232–Met-233 each bind L-ornithine. Carbamoyl phosphate contacts are provided by residues Cys-268–Leu-269 and Arg-296.

It belongs to the aspartate/ornithine carbamoyltransferase superfamily. OTCase family.

Its subcellular location is the cytoplasm. It catalyses the reaction carbamoyl phosphate + L-ornithine = L-citrulline + phosphate + H(+). It functions in the pathway amino-acid biosynthesis; L-arginine biosynthesis; L-arginine from L-ornithine and carbamoyl phosphate: step 1/3. In terms of biological role, reversibly catalyzes the transfer of the carbamoyl group from carbamoyl phosphate (CP) to the N(epsilon) atom of ornithine (ORN) to produce L-citrulline. The protein is Ornithine carbamoyltransferase of Bordetella avium (strain 197N).